The primary structure comprises 776 residues: Ribosomal RNA large subunit methyltransferase K/L (776 aa).

Residues 68 to 183 (DLYKICLWSR…DKQAELYLDL (116 aa)) form the THUMP domain.

This sequence belongs to the methyltransferase superfamily. RlmKL family.

The protein localises to the cytoplasm. It carries out the reaction guanosine(2445) in 23S rRNA + S-adenosyl-L-methionine = N(2)-methylguanosine(2445) in 23S rRNA + S-adenosyl-L-homocysteine + H(+). It catalyses the reaction guanosine(2069) in 23S rRNA + S-adenosyl-L-methionine = N(2)-methylguanosine(2069) in 23S rRNA + S-adenosyl-L-homocysteine + H(+). Functionally, specifically methylates the guanine in position 2445 (m2G2445) and the guanine in position 2069 (m7G2069) of 23S rRNA. The sequence is that of Ribosomal RNA large subunit methyltransferase K/L from Psychrobacter cryohalolentis (strain ATCC BAA-1226 / DSM 17306 / VKM B-2378 / K5).